Reading from the N-terminus, the 310-residue chain is Coproporphyrin III ferrochelatase (310 aa).

Fe-coproporphyrin III is bound by residues tyrosine 13, arginine 30, 46–47, serine 54, and tyrosine 125; that span reads RY. The Fe(2+) site is built by histidine 183 and glutamate 264.

The protein belongs to the ferrochelatase family.

The protein resides in the cytoplasm. It catalyses the reaction Fe-coproporphyrin III + 2 H(+) = coproporphyrin III + Fe(2+). The protein operates within porphyrin-containing compound metabolism; protoheme biosynthesis. In terms of biological role, involved in coproporphyrin-dependent heme b biosynthesis. Catalyzes the insertion of ferrous iron into coproporphyrin III to form Fe-coproporphyrin III. The polypeptide is Coproporphyrin III ferrochelatase (Geobacillus sp. (strain WCH70)).